Consider the following 824-residue polypeptide: Acyl-homoserine lactone acylase QuiP (824 aa).

A signal peptide spans 1 to 26 (MASPALRHFLPRFGAAAAAASFLSLA). Catalysis depends on Ser-264, which acts as the Nucleophile.

Belongs to the peptidase S45 family. Heterodimer of an alpha subunit and a beta subunit processed from the same precursor.

It is found in the periplasm. The enzyme catalyses an N-acyl-L-homoserine lactone + H2O = L-homoserine lactone + a carboxylate. Its function is as follows. Catalyzes the deacylation of acyl-homoserine lactone (AHL or acyl-HSL), releasing homoserine lactone (HSL) and the corresponding fatty acid. Possesses a specificity for the degradation of long-chain acyl-HSLs (side chains of seven or more carbons in length). This chain is Acyl-homoserine lactone acylase QuiP (quiP), found in Pseudomonas syringae pv. syringae (strain B728a).